We begin with the raw amino-acid sequence, 88 residues long: UPF0298 protein BC_3932 (88 aa).

Belongs to the UPF0298 family.

Its subcellular location is the cytoplasm. This Bacillus cereus (strain ATCC 14579 / DSM 31 / CCUG 7414 / JCM 2152 / NBRC 15305 / NCIMB 9373 / NCTC 2599 / NRRL B-3711) protein is UPF0298 protein BC_3932.